We begin with the raw amino-acid sequence, 434 residues long: MPIITDVYAREVLDSRGNPTVEVEVLTESGAFGRALVPSGASTGEHEAVELRDGDKSRYLGKGVTKAVENVNEIIAPEIIEGEFSVLDQVSIDKMMIALDGTPNKGKLGANAILGVSIAVARAAADLLGQPLYKYLGGFNGKQLPVPMMNIVNGGSHSDAPIAFQEFMILPVGATTFKESLRWGTEIFHNLKSILSQRGLETAVGDEGGFAPKFEGTEDAVETIIQAIEAAGYKPGEEVFLGFDCASSEFYENGVYDYSKFEGEHGAKRTAAEQVDYLEQLVDKYPIITIEDGMDENDWDGWKQLTERIGDRVQLVGDDLFVTNTEILAKGIENGIGNSILIKVNQIGTLTETFDAIEMAQKAGYTAVVSHRSGETEDTTIADIAVATNAGQIKTGSLSRTDRIAKYNQLLRIEDELFETAKYDGIKSFYNLDK.

Ala-41 provides a ligand contact to phosphoenolpyruvate. Gln-165 contributes to the (2R)-2-phosphoglycerate binding site. Glu-207 (proton donor) is an active-site residue. Residues Asp-244, Glu-291, and Asp-318 each contribute to the Mg(2+) site. Phosphoenolpyruvate-binding residues include Lys-343, Arg-372, Ser-373, and Lys-394. 4 residues coordinate (2R)-2-phosphoglycerate: Lys-343, Arg-372, Ser-373, and Lys-394. Catalysis depends on Lys-343, which acts as the Proton acceptor.

The protein belongs to the enolase family. In terms of assembly, homodimer and homooctamer; the homodimer is inactive. It depends on Mg(2+) as a cofactor.

It localises to the cytoplasm. The protein resides in the secreted. The protein localises to the cell surface. It catalyses the reaction (2R)-2-phosphoglycerate = phosphoenolpyruvate + H2O. It functions in the pathway carbohydrate degradation; glycolysis; pyruvate from D-glyceraldehyde 3-phosphate: step 4/5. In terms of biological role, catalyzes the reversible conversion of 2-phosphoglycerate (2-PG) into phosphoenolpyruvate (PEP). It is essential for the degradation of carbohydrates via glycolysis. Functionally, 'Moonlights' as a laminin receptor. Binds laminin when expressed on the bacterial cell surface; this probably induces destruction of the extracellular matrix, favoring invasion and dissemination. The sequence is that of Enolase from Staphylococcus aureus.